Consider the following 233-residue polypeptide: uncharacterized protein (233 aa).

The next 6 helical transmembrane spans lie at 7 to 27 (VPIFIAILSFIVMCIGELLAY), 36 to 56 (YEFEAISFGFIFGVATLILIP), 62 to 82 (MFVLYVILGMITVYLIEKYLA), 119 to 139 (LIIAVSYISEIGLPLYLAILM), 159 to 179 (PLYPGVFVSFGTVLGTIVGLV), and 188 to 208 (ILLAFSGGVFLGAFLMLAPHI).

It is found in the cell membrane. This is an uncharacterized protein from Methanocaldococcus jannaschii (strain ATCC 43067 / DSM 2661 / JAL-1 / JCM 10045 / NBRC 100440) (Methanococcus jannaschii).